The chain runs to 408 residues: Dual-specificity RNA methyltransferase RlmN (408 aa).

Glutamate 126 functions as the Proton acceptor in the catalytic mechanism. Positions 132 to 373 (EEGRGTLCLS…NQAGYASPIR (242 aa)) constitute a Radical SAM core domain. A disulfide bond links cysteine 139 and cysteine 384. Residues cysteine 146, cysteine 150, and cysteine 153 each coordinate [4Fe-4S] cluster. Residues 210 to 211 (GE), serine 242, 264 to 266 (SLH), and asparagine 341 each bind S-adenosyl-L-methionine. Cysteine 384 serves as the catalytic S-methylcysteine intermediate.

It belongs to the radical SAM superfamily. RlmN family. The cofactor is [4Fe-4S] cluster.

Its subcellular location is the cytoplasm. The catalysed reaction is adenosine(2503) in 23S rRNA + 2 reduced [2Fe-2S]-[ferredoxin] + 2 S-adenosyl-L-methionine = 2-methyladenosine(2503) in 23S rRNA + 5'-deoxyadenosine + L-methionine + 2 oxidized [2Fe-2S]-[ferredoxin] + S-adenosyl-L-homocysteine. The enzyme catalyses adenosine(37) in tRNA + 2 reduced [2Fe-2S]-[ferredoxin] + 2 S-adenosyl-L-methionine = 2-methyladenosine(37) in tRNA + 5'-deoxyadenosine + L-methionine + 2 oxidized [2Fe-2S]-[ferredoxin] + S-adenosyl-L-homocysteine. Specifically methylates position 2 of adenine 2503 in 23S rRNA and position 2 of adenine 37 in tRNAs. m2A2503 modification seems to play a crucial role in the proofreading step occurring at the peptidyl transferase center and thus would serve to optimize ribosomal fidelity. The chain is Dual-specificity RNA methyltransferase RlmN from Bartonella henselae (strain ATCC 49882 / DSM 28221 / CCUG 30454 / Houston 1) (Rochalimaea henselae).